The sequence spans 425 residues: Glutamyl-tRNA reductase (425 aa).

Residues 49–52 (TCNR), serine 107, 112–114 (EPQ), and glutamine 118 contribute to the substrate site. Cysteine 50 acts as the Nucleophile in catalysis. 187 to 192 (GAGETI) contacts NADP(+).

This sequence belongs to the glutamyl-tRNA reductase family. As to quaternary structure, homodimer.

The enzyme catalyses (S)-4-amino-5-oxopentanoate + tRNA(Glu) + NADP(+) = L-glutamyl-tRNA(Glu) + NADPH + H(+). Its pathway is porphyrin-containing compound metabolism; protoporphyrin-IX biosynthesis; 5-aminolevulinate from L-glutamyl-tRNA(Glu): step 1/2. Its function is as follows. Catalyzes the NADPH-dependent reduction of glutamyl-tRNA(Glu) to glutamate 1-semialdehyde (GSA). The protein is Glutamyl-tRNA reductase of Pseudomonas entomophila (strain L48).